The sequence spans 156 residues: Large ribosomal subunit protein uL11 (156 aa).

The disordered stretch occupies residues 1–20 (MAQSVKTMVEGGKATTGPPI).

It belongs to the universal ribosomal protein uL11 family. Part of the ribosomal stalk of the 50S ribosomal subunit. Interacts with L10 and the large rRNA to form the base of the stalk. L10 forms an elongated spine to which L12 dimers bind in a sequential fashion forming a multimeric L10(L12)X complex.

Forms part of the ribosomal stalk which helps the ribosome interact with GTP-bound translation factors. This Thermoplasma acidophilum (strain ATCC 25905 / DSM 1728 / JCM 9062 / NBRC 15155 / AMRC-C165) protein is Large ribosomal subunit protein uL11.